The following is a 712-amino-acid chain: Polyribonucleotide nucleotidyltransferase (712 aa).

Asp487 and Asp493 together coordinate Mg(2+). Residues 554-613 form the KH domain; the sequence is PKIITMTINPDKIRDVIGPSGKQINKIIEETGVKIDIEQDGTVFISSINQEMNDKAKKII. Residues 623–691 enclose the S1 motif domain; that stretch reads GEIYEGKVKR…KQGRVNLSRK (69 aa).

The protein belongs to the polyribonucleotide nucleotidyltransferase family. It depends on Mg(2+) as a cofactor.

It localises to the cytoplasm. The enzyme catalyses RNA(n+1) + phosphate = RNA(n) + a ribonucleoside 5'-diphosphate. Involved in mRNA degradation. Catalyzes the phosphorolysis of single-stranded polyribonucleotides processively in the 3'- to 5'-direction. The sequence is that of Polyribonucleotide nucleotidyltransferase from Bacillus cereus (strain AH820).